The sequence spans 353 residues: Photosystem II D2 protein (353 aa).

Thr-2 bears the N-acetylthreonine mark. A Phosphothreonine modification is found at Thr-2. The chain crosses the membrane as a helical span at residues 41–61 (CAYFALGGWLTGTTFVTSWYT). Position 118 (His-118) interacts with chlorophyll a. Residues 125–141 (GFMLRQFELARSVQLRP) form a helical membrane-spanning segment. Pheophytin a contacts are provided by Gln-130 and Asn-143. A helical membrane pass occupies residues 153–166 (VFVSVFLIYPLGQS). His-198 is a binding site for chlorophyll a. A helical membrane pass occupies residues 208–228 (AALLCAIHGATVENTLFEDGD). Positions 215 and 262 each coordinate a plastoquinone. His-215 is a Fe cation binding site. Residue His-269 participates in Fe cation binding. Residues 279–295 (GLWMSAIGVVGLALNLR) traverse the membrane as a helical segment.

It belongs to the reaction center PufL/M/PsbA/D family. As to quaternary structure, PSII is composed of 1 copy each of membrane proteins PsbA, PsbB, PsbC, PsbD, PsbE, PsbF, PsbH, PsbI, PsbJ, PsbK, PsbL, PsbM, PsbT, PsbX, PsbY, PsbZ, Psb30/Ycf12, at least 3 peripheral proteins of the oxygen-evolving complex and a large number of cofactors. It forms dimeric complexes. The D1/D2 heterodimer binds P680, chlorophylls that are the primary electron donor of PSII, and subsequent electron acceptors. It shares a non-heme iron and each subunit binds pheophytin, quinone, additional chlorophylls, carotenoids and lipids. There is also a Cl(-1) ion associated with D1 and D2, which is required for oxygen evolution. The PSII complex binds additional chlorophylls, carotenoids and specific lipids. serves as cofactor.

The protein resides in the plastid. It is found in the chloroplast thylakoid membrane. The catalysed reaction is 2 a plastoquinone + 4 hnu + 2 H2O = 2 a plastoquinol + O2. In terms of biological role, photosystem II (PSII) is a light-driven water:plastoquinone oxidoreductase that uses light energy to abstract electrons from H(2)O, generating O(2) and a proton gradient subsequently used for ATP formation. It consists of a core antenna complex that captures photons, and an electron transfer chain that converts photonic excitation into a charge separation. The D1/D2 (PsbA/PsbD) reaction center heterodimer binds P680, the primary electron donor of PSII as well as several subsequent electron acceptors. D2 is needed for assembly of a stable PSII complex. This Zygnema circumcarinatum (Green alga) protein is Photosystem II D2 protein.